Reading from the N-terminus, the 127-residue chain is Aspartate 1-decarboxylase (127 aa).

Serine 25 acts as the Schiff-base intermediate with substrate; via pyruvic acid in catalysis. Serine 25 is modified (pyruvic acid (Ser)). Threonine 57 contacts substrate. The active-site Proton donor is tyrosine 58. Position 73–75 (73–75 (GAA)) interacts with substrate.

Belongs to the PanD family. Heterooctamer of four alpha and four beta subunits. The cofactor is pyruvate. Post-translationally, is synthesized initially as an inactive proenzyme, which is activated by self-cleavage at a specific serine bond to produce a beta-subunit with a hydroxyl group at its C-terminus and an alpha-subunit with a pyruvoyl group at its N-terminus.

It localises to the cytoplasm. It catalyses the reaction L-aspartate + H(+) = beta-alanine + CO2. It functions in the pathway cofactor biosynthesis; (R)-pantothenate biosynthesis; beta-alanine from L-aspartate: step 1/1. Catalyzes the pyruvoyl-dependent decarboxylation of aspartate to produce beta-alanine. This Listeria monocytogenes serotype 4b (strain CLIP80459) protein is Aspartate 1-decarboxylase.